A 457-amino-acid polypeptide reads, in one-letter code: Dihydrolipoyllysine-residue acetyltransferase component of pyruvate dehydrogenase complex, mitochondrial (457 aa).

The N-terminal 30 residues, 1–30 (MLSAALRRRVLAPTHSALRTGFAAHVVRHY), are a transit peptide targeting the mitochondrion. A Lipoyl-binding domain is found at 36–112 (HQVIKMPALS…PVGSPIAVLV (77 aa)). Lys-77 is modified (N6-lipoyllysine). The tract at residues 129–168 (AGGDAAKPAAPKKEEKSESKSESASAPEPTPEPQQYQSQG) is disordered. Basic and acidic residues predominate over residues 139–149 (PKKEEKSESKS). The residue at position 148 (Lys-148) is an N6-crotonyllysine. The Peripheral subunit-binding (PSBD) domain occupies 179 to 216 (NISASAKRLAREKGISIDGLKGTGKNGQITEEDVKKAI). Active-site residues include His-430 and Asp-434.

This sequence belongs to the 2-oxoacid dehydrogenase family. As to quaternary structure, eukaryotic pyruvate dehydrogenase (PDH) complexes are organized as a core consisting of the oligomeric dihydrolipoamide acetyl-transferase (E2), around which are arranged multiple copies of pyruvate dehydrogenase (E1), dihydrolipoamide dehydrogenase (E3) and protein X (E3BP) bound by non-covalent bonds. Interacts with SIR5; the interaction is direct. The cofactor is (R)-lipoate. In terms of processing, decrotonylated at 'Lys-148' by SIR5, which inhibits the activity of the pyruvate dehydrogenase complex (PDC).

The protein resides in the mitochondrion matrix. The catalysed reaction is N(6)-[(R)-dihydrolipoyl]-L-lysyl-[protein] + acetyl-CoA = N(6)-[(R)-S(8)-acetyldihydrolipoyl]-L-lysyl-[protein] + CoA. Functionally, the pyruvate dehydrogenase complex catalyzes the overall conversion of pyruvate to acetyl-CoA and CO(2). High pyruvate dehydrogenase complex activity is required for sufficient energy production during germination of conidia. The sequence is that of Dihydrolipoyllysine-residue acetyltransferase component of pyruvate dehydrogenase complex, mitochondrial from Fusarium oxysporum f. sp. lycopersici (strain 4287 / CBS 123668 / FGSC 9935 / NRRL 34936) (Fusarium vascular wilt of tomato).